The chain runs to 706 residues: Polyribonucleotide nucleotidyltransferase (706 aa).

Mg(2+)-binding residues include D490 and D496. In terms of domain architecture, KH spans 556–615 (PRIETMQIPTDKIREVIGSGGKVIREIVEVSGAKVDINDEGIIKIASPNGDSIQKAYDMI). The region spanning 625-693 (GKIYKGKVVK…DRGKVRLAMK (69 aa)) is the S1 motif domain.

Belongs to the polyribonucleotide nucleotidyltransferase family. The cofactor is Mg(2+).

The protein resides in the cytoplasm. It carries out the reaction RNA(n+1) + phosphate = RNA(n) + a ribonucleoside 5'-diphosphate. Functionally, involved in mRNA degradation. Catalyzes the phosphorolysis of single-stranded polyribonucleotides processively in the 3'- to 5'-direction. The chain is Polyribonucleotide nucleotidyltransferase from Jannaschia sp. (strain CCS1).